Here is a 137-residue protein sequence, read N- to C-terminus: Nucleoside diphosphate kinase (137 aa).

Residues lysine 10, phenylalanine 58, arginine 86, threonine 92, arginine 103, and asparagine 113 each contribute to the ATP site. The Pros-phosphohistidine intermediate role is filled by histidine 116.

This sequence belongs to the NDK family. Homotetramer. It depends on Mg(2+) as a cofactor.

It is found in the cytoplasm. It carries out the reaction a 2'-deoxyribonucleoside 5'-diphosphate + ATP = a 2'-deoxyribonucleoside 5'-triphosphate + ADP. The enzyme catalyses a ribonucleoside 5'-diphosphate + ATP = a ribonucleoside 5'-triphosphate + ADP. Its function is as follows. Major role in the synthesis of nucleoside triphosphates other than ATP. The ATP gamma phosphate is transferred to the NDP beta phosphate via a ping-pong mechanism, using a phosphorylated active-site intermediate. The polypeptide is Nucleoside diphosphate kinase (Helicobacter acinonychis (strain Sheeba)).